The sequence spans 89 residues: MAVKIRLRRMGAKKNPFYRIVVADSRSPRDGRFIEEIGYYDPIKKPAEVKIDEAKAQDWLKKGAQLSDTAKSLFVKAGIIPGRAKTNEA.

This sequence belongs to the bacterial ribosomal protein bS16 family.

In Desulforamulus reducens (strain ATCC BAA-1160 / DSM 100696 / MI-1) (Desulfotomaculum reducens), this protein is Small ribosomal subunit protein bS16.